The sequence spans 1017 residues: Nonsense-mediated mRNA decay factor SMG5 (1017 aa).

S2 is subject to N-acetylserine. 2 positions are modified to phosphoserine: S2 and S423. 2 disordered regions span residues 406-562 (GENP…PSEA) and 597-640 (TEPN…CRNE). A compositionally biased stretch (basic residues) spans 448 to 467 (KSRKHSRLSCLRRRRRHHPP). The segment covering 486–496 (DSAQASDGSDS) has biased composition (low complexity). Residues 620 to 629 (ASEDGSESEG) show a composition bias toward acidic residues. The stretch at 798 to 842 (AQSEQESLLQQAQAQFRMAEEEARRNRLMRDMAQLRLQLEVSQLE) forms a coiled coil. The 124-residue stretch at 873 to 996 (RQLATSGRFI…GPMQAALQAA (124 aa)) folds into the PINc domain.

In terms of assembly, interacts with TERT, PPP2CA and SMG1. Part of a complex that contains SMG1, SMG5, SMG7, PPP2CA, a short isoform of UPF3A (isoform UPF3AS, but not isoform UPF3AL) and phosphorylated UPF1. Not detected in complexes that contain unphosphorylated UPF1.

Its subcellular location is the cytoplasm. It is found in the nucleus. Plays a role in nonsense-mediated mRNA decay. Does not have RNase activity by itself. Promotes dephosphorylation of UPF1. Together with SMG7 is thought to provide a link to the mRNA degradation machinery involving exonucleolytic pathways, and to serve as an adapter for UPF1 to protein phosphatase 2A (PP2A), thereby triggering UPF1 dephosphorylation. Necessary for TERT activity. The chain is Nonsense-mediated mRNA decay factor SMG5 from Mus musculus (Mouse).